The primary structure comprises 557 residues: Dihydroxy-acid dehydratase (557 aa).

Cys-47 provides a ligand contact to [2Fe-2S] cluster. A Mg(2+)-binding site is contributed by Asp-79. [2Fe-2S] cluster is bound at residue Cys-120. Mg(2+) contacts are provided by Asp-121 and Lys-122. Lys-122 carries the N6-carboxylysine modification. Cys-192 serves as a coordination point for [2Fe-2S] cluster. Residue Glu-444 participates in Mg(2+) binding. Ser-470 serves as the catalytic Proton acceptor.

The protein belongs to the IlvD/Edd family. Homodimer. [2Fe-2S] cluster is required as a cofactor. The cofactor is Mg(2+).

It carries out the reaction (2R)-2,3-dihydroxy-3-methylbutanoate = 3-methyl-2-oxobutanoate + H2O. The catalysed reaction is (2R,3R)-2,3-dihydroxy-3-methylpentanoate = (S)-3-methyl-2-oxopentanoate + H2O. The protein operates within amino-acid biosynthesis; L-isoleucine biosynthesis; L-isoleucine from 2-oxobutanoate: step 3/4. It participates in amino-acid biosynthesis; L-valine biosynthesis; L-valine from pyruvate: step 3/4. Functions in the biosynthesis of branched-chain amino acids. Catalyzes the dehydration of (2R,3R)-2,3-dihydroxy-3-methylpentanoate (2,3-dihydroxy-3-methylvalerate) into 2-oxo-3-methylpentanoate (2-oxo-3-methylvalerate) and of (2R)-2,3-dihydroxy-3-methylbutanoate (2,3-dihydroxyisovalerate) into 2-oxo-3-methylbutanoate (2-oxoisovalerate), the penultimate precursor to L-isoleucine and L-valine, respectively. The protein is Dihydroxy-acid dehydratase of Synechococcus sp. (strain CC9902).